The following is a 345-amino-acid chain: Molybdate/tungstate-binding protein WtpA (345 aa).

The signal sequence occupies residues 1–27 (MREGGVMKKRLLALIVAFAVLTAGCLG). Residues 41-42 (GS), S75, 160-162 (DPC), E218, and Y236 contribute to the molybdate site. Residues 41 to 42 (GS), S75, 160 to 162 (DPC), E218, and Y236 contribute to the tungstate site.

It belongs to the bacterial solute-binding protein 1 family. WtpA subfamily. Monomer. The complex is composed of two ATP-binding proteins (WtpC), two transmembrane proteins (WtpB) and a solute-binding protein (WtpA).

Its subcellular location is the cell membrane. In terms of biological role, part of the ABC transporter complex WtpABC involved in molybdate/tungstate import. Binds tungstate and molybdate, with a preference for tungstate. This Pyrococcus furiosus (strain ATCC 43587 / DSM 3638 / JCM 8422 / Vc1) protein is Molybdate/tungstate-binding protein WtpA.